Here is a 173-residue protein sequence, read N- to C-terminus: Archaemetzincin (173 aa).

Zn(2+) is bound at residue H130. Catalysis depends on E131, which acts as the Proton acceptor. Zn(2+)-binding residues include H134, H140, C141, C146, C165, and C168.

This sequence belongs to the peptidase M54 family. As to quaternary structure, monomer. The cofactor is Zn(2+).

Its function is as follows. Probable zinc metalloprotease whose natural substrate is unknown. The polypeptide is Archaemetzincin (Halobacterium salinarum (strain ATCC 29341 / DSM 671 / R1)).